Reading from the N-terminus, the 279-residue chain is MNQISINNVDYIYSDGFEALHDINMSIKKGERVAILGPNGAGKSTLFNMLNGIISPTSGEVKINGLDTKVKKNLNVIRRDVGMVFQDSDDQLFNSSVMQEIAYGLVNMKVSEEELQSRVKWALNVVNMDGFEKKSPHNLSGGQKKRIALASVLAMKPEVLVLDEPTVSLDPRGTIKLVKLLKKINEEMKITIVFSTHDMDIVPLFADKVYVLNEGKLILQGGVKEVFNNKKVLRNINLRLPRVAHLAEILKSDGCIEFDELPLTIGEIRKCIKNLKGGI.

Residues 4–239 (ISINNVDYIY…KKVLRNINLR (236 aa)) enclose the ABC transporter domain. 37–44 (GPNGAGKS) is a binding site for ATP.

It belongs to the ABC transporter superfamily.

The protein resides in the cell membrane. Functionally, probably part of an ABC transporter complex. Responsible for energy coupling to the transport system. This is Putative ABC transporter ATP-binding protein CA_C1368 from Clostridium acetobutylicum (strain ATCC 824 / DSM 792 / JCM 1419 / IAM 19013 / LMG 5710 / NBRC 13948 / NRRL B-527 / VKM B-1787 / 2291 / W).